A 188-amino-acid polypeptide reads, in one-letter code: Kininogen (188 aa).

3 N-linked (GlcNAc...) asparagine glycosylation sites follow: asparagine 36, asparagine 150, and asparagine 182.

Post-translationally, bradykinin is released from kininogen by kallikrein. N-glycosylated. Contains O-acetylated sialic acids as terminal elements on biantennary and triantennary N-glycans.

Functionally, inhibits papain and ficin (cysteine proteinases) but not trypsin (a serine proteinase). The chain is Kininogen from Anarhichas minor (Arctic spotted wolffish).